A 270-amino-acid polypeptide reads, in one-letter code: Glutamate racemase (270 aa).

Substrate is bound by residues 7-8 and 39-40; these read DS and YG. Catalysis depends on cysteine 70, which acts as the Proton donor/acceptor. Residue 71–72 participates in substrate binding; it reads NT. Residue cysteine 194 is the Proton donor/acceptor of the active site. 195–196 contacts substrate; the sequence is TH.

Belongs to the aspartate/glutamate racemases family.

The catalysed reaction is L-glutamate = D-glutamate. The protein operates within cell wall biogenesis; peptidoglycan biosynthesis. In terms of biological role, provides the (R)-glutamate required for cell wall biosynthesis. This is Glutamate racemase from Cereibacter sphaeroides (strain ATCC 17025 / ATH 2.4.3) (Rhodobacter sphaeroides).